The following is a 44-amino-acid chain: Large ribosomal subunit protein bL34 (44 aa).

2 stretches are compositionally biased toward basic residues: residues 1–14 and 31–44; these read MKRT…KRQK and LSAR…RLAV. Positions 1 to 44 are disordered; that stretch reads MKRTLGGTTRKRQKTSGFRARMRTASGRRVLSARRRRGRHRLAV.

This sequence belongs to the bacterial ribosomal protein bL34 family.

This chain is Large ribosomal subunit protein bL34, found in Gloeobacter violaceus (strain ATCC 29082 / PCC 7421).